The primary structure comprises 854 residues: Discoidin domain-containing receptor 2 (854 aa).

An N-terminal signal peptide occupies residues 1–21; the sequence is MIPIPRMPLVLLLLLLILGSA. Residues 22 to 399 are Extracellular-facing; the sequence is KAQVNPAICR…MLKVDDSNTR (378 aa). The 156-residue stretch at 30–185 folds into the F5/8 type C domain; it reads CRYPLGMSGG…VCMRVELYGC (156 aa). 2 disulfides stabilise this stretch: cysteine 30–cysteine 185 and cysteine 73–cysteine 177. Residues asparagine 121, asparagine 213, asparagine 261, asparagine 280, and asparagine 372 are each glycosylated (N-linked (GlcNAc...) asparagine). A helical transmembrane segment spans residues 400–421; that stretch reads ILIGCLVAIIFILLAIIVIILW. Residues 422 to 854 are Cytoplasmic-facing; that stretch reads RQFWQKMLEK…HLLLLQQGAE (433 aa). Positions 452–471 are disordered; that stretch reads SMFNNNRSSSPSEQESNSTY. Residues 455–469 show a composition bias toward low complexity; it reads NNNRSSSPSEQESNS. Tyrosine 471 carries the post-translational modification Phosphotyrosine; by SRC and autocatalysis. One can recognise a Protein kinase domain in the interval 563-848; the sequence is LAFKEKLGEG…PSFQEIHLLL (286 aa). ATP-binding positions include 569–577 and lysine 608; that span reads LGEGQFGEV. Aspartate 709 serves as the catalytic Proton acceptor. 3 positions are modified to phosphotyrosine; by SRC and autocatalysis: tyrosine 735, tyrosine 739, and tyrosine 740.

The protein belongs to the protein kinase superfamily. Tyr protein kinase family. Insulin receptor subfamily. In terms of assembly, binds hydroxyproline-rich sequence motifs in fibrillar, glycosylated collagen, such as the GQOGVMGFO motif, where O stands for hydroxyproline. Interacts with SRC. Interacts (tyrosine phosphorylated) with SHC1. N-glycosylated. Post-translationally, tyrosine phosphorylated in response to collagen binding. Phosphorylated by SRC; this is required for activation and subsequent autophosphorylation on additional tyrosine residues. As to expression, widely expressed. Detected in lung, ovary, skin and in testis Leydig cells (at protein level). Widely expressed. Detected at high levels in heart, lung, skeletal muscle, central nervous system (CNS) and kidney, and at lower levels in brain and testis. Detected in chondrocytes in tibia growth plates of young mice.

It localises to the cell membrane. The enzyme catalyses L-tyrosyl-[protein] + ATP = O-phospho-L-tyrosyl-[protein] + ADP + H(+). Present in an inactive state in the absence of collagen binding and phosphorylation by SRC. Tyrosine phosphorylation enhances the affinity for ATP and the catalytic activity. In terms of biological role, tyrosine kinase that functions as a cell surface receptor for fibrillar collagen and regulates cell differentiation, remodeling of the extracellular matrix, cell migration and cell proliferation. Required for normal bone development. Regulates osteoblast differentiation and chondrocyte maturation via a signaling pathway that involves MAP kinases and leads to the activation of the transcription factor RUNX2. Regulates remodeling of the extracellular matrix by up-regulation of the collagenases MMP1, MMP2 and MMP13, and thereby facilitates cell migration and tumor cell invasion. Promotes fibroblast migration and proliferation, and thereby contributes to cutaneous wound healing. This chain is Discoidin domain-containing receptor 2 (Ddr2), found in Mus musculus (Mouse).